A 297-amino-acid polypeptide reads, in one-letter code: uncharacterized protein (297 aa).

The segment at 1–29 (MAESKAKNMFQKLSLTPKRNHEHDAGRNI) is disordered. A compositionally biased stretch (basic and acidic residues) spans 19 to 29 (RNHEHDAGRNI).

This is an uncharacterized protein from Caenorhabditis elegans.